The chain runs to 67 residues: Large ribosomal subunit protein uL29 (67 aa).

The protein belongs to the universal ribosomal protein uL29 family.

The chain is Large ribosomal subunit protein uL29 from Zymomonas mobilis subsp. mobilis (strain ATCC 31821 / ZM4 / CP4).